Consider the following 275-residue polypeptide: Probable siderophore transport system ATP-binding protein YusV (275 aa).

One can recognise an ABC transporter domain in the interval 6 to 242 (ISTETLSLGY…DLVQNVFSMN (237 aa)). 38-45 (GSNGCGKS) is a binding site for ATP.

The protein belongs to the ABC transporter superfamily. As to quaternary structure, the iron-hydroxamate siderophore complex is composed of one ATP-binding protein (YusV), two transmembrane proteins (YfiZ and YfhA) and a solute-binding protein (YfiY); the catechoplate siderophore complex is composed of one ATP-binding protein (YusV), two transmembrane proteins (FeuB and FeuC) and a solute-binding protein (FeuA).

Its subcellular location is the cell membrane. Functionally, provides the ATPase subunit for at least 2 ABC transporter complexes; YfiYZ/YfhA/YusV involved in import of the iron-hydroxamate siderophores schizokinen, arthrobactin and corprogen, and FeuABC/YusV involved in import of the catecholate siderophores bacillibactin and enterobactin. Probably responsible for energy coupling to the transport system. This chain is Probable siderophore transport system ATP-binding protein YusV (yusV), found in Bacillus subtilis (strain 168).